A 398-amino-acid chain; its full sequence is Serpin-ZX (398 aa).

An RCL region spans residues 342 to 366 (GTEAAARTARVVTLRSLPVEPVKVD).

This sequence belongs to the serpin family. As to expression, expressed in roots, coleoptiles, shoots, leaves, embryo and endosperm.

In terms of biological role, inhibits chymotrypsin, cathepsin G and trypsin in vitro. The protein is Serpin-ZX (PAZX) of Hordeum vulgare (Barley).